A 231-amino-acid polypeptide reads, in one-letter code: Large ribosomal subunit protein uL1 (231 aa).

The protein belongs to the universal ribosomal protein uL1 family. As to quaternary structure, part of the 50S ribosomal subunit.

Functionally, binds directly to 23S rRNA. The L1 stalk is quite mobile in the ribosome, and is involved in E site tRNA release. In terms of biological role, protein L1 is also a translational repressor protein, it controls the translation of the L11 operon by binding to its mRNA. This Francisella tularensis subsp. tularensis (strain FSC 198) protein is Large ribosomal subunit protein uL1.